A 225-amino-acid polypeptide reads, in one-letter code: MIEQTTIALLSGGIDSATAACIAMEAGQKVIGLSFDYGQRHLKELQAAADLAKNLNLEDHITIKIDLSSWGGSSLTDTSQAIPTKGIQKNTIPNTYVPGRNTIFVAIGLSLAEARGANRIALGINAMDYSGYPDCRPDYLKAYQELANLSSRVGREGKGIKLWAPLLDWEKTKIFEEALRLKIPIEKTWSCYQGESKPCGRCDSCRIRDKALKEIGREDLCSQNI.

10 to 20 (LSGGIDSATAA) contributes to the ATP binding site. Residues Cys191, Cys199, Cys202, and Cys205 each coordinate Zn(2+).

Belongs to the QueC family. Zn(2+) is required as a cofactor.

The enzyme catalyses 7-carboxy-7-deazaguanine + NH4(+) + ATP = 7-cyano-7-deazaguanine + ADP + phosphate + H2O + H(+). Its pathway is purine metabolism; 7-cyano-7-deazaguanine biosynthesis. Its function is as follows. Catalyzes the ATP-dependent conversion of 7-carboxy-7-deazaguanine (CDG) to 7-cyano-7-deazaguanine (preQ(0)). In Prochlorococcus marinus (strain NATL1A), this protein is 7-cyano-7-deazaguanine synthase.